The following is a 133-amino-acid chain: Small ribosomal subunit protein uS8 (133 aa).

Residues 1–32 are disordered; sequence MANHDPISDMLTRIRNASEKRHESTKVPASRM. Positions 16 to 25 are enriched in basic and acidic residues; the sequence is NASEKRHEST.

This sequence belongs to the universal ribosomal protein uS8 family. Part of the 30S ribosomal subunit. Contacts proteins S5 and S12.

In terms of biological role, one of the primary rRNA binding proteins, it binds directly to 16S rRNA central domain where it helps coordinate assembly of the platform of the 30S subunit. In Synechococcus sp. (strain CC9311), this protein is Small ribosomal subunit protein uS8.